A 400-amino-acid polypeptide reads, in one-letter code: Protein phosphatase methylesterase 1 (400 aa).

Residues 32–70 (DENDGDALGSLPSFNGQSNRNRKYTGKTGSTTDRISSKE) form a disordered region. The 252-residue stretch at 114–365 (PIFIFHHGAG…DSGHFIQEDS (252 aa)) folds into the AB hydrolase-1 domain. Catalysis depends on residues Ser205, Asp233, and His359.

The protein belongs to the AB hydrolase superfamily. In terms of assembly, interacts with and inactivates the phosphatase PP2A-like catalytic subunits PPG1, PPH21, PPH22, PPH3 and SIT4.

It carries out the reaction [phosphatase 2A protein]-C-terminal L-leucine methyl ester + H2O = [phosphatase 2A protein]-C-terminal L-leucine + methanol + H(+). Its function is as follows. Demethylates proteins that have been reversibly carboxymethylated. Demethylates the phosphatase PP2A catalytic subunits PPH21 and PPH22. Forms inactive complexes (PP2Ai) with phosphatase PP2A-like catalytic subunits. Involved in the regulation of cell cycle progression at START. This chain is Protein phosphatase methylesterase 1 (PPE1), found in Saccharomyces cerevisiae (strain ATCC 204508 / S288c) (Baker's yeast).